The primary structure comprises 319 residues: Cell division protein PomZ (319 aa).

61 to 68 (KGGTGKTS) serves as a coordination point for ATP.

The protein belongs to the ParA family. In terms of assembly, interacts with FtsZ in pull-down experiments.

It is found in the cytoplasm. Spatial regulator of cell division that is involved in identifying the incipient division site, recruiting FtsZ to the division site and stabilizing the Z-ring. Binds ATP and GTP. The sequence is that of Cell division protein PomZ from Myxococcus xanthus (strain DK1622).